We begin with the raw amino-acid sequence, 177 residues long: MASGNARIGKPAPDFKATAVVDGAFKEVKLSDYKGKYVVLFFYPLDFTFVCPTEIIAFSNRAEDFHKLGCEVLGVSVDSQFTHLAWINTPRKEGGLGPLNIPLLADVTRRLSEDYGVLKTDEGIAYRGLFIIDGKGVLRQITVNDLPVGRSVDEALRLVQAFQYTDEHGEGPCFASP.

Alanine 2 carries the N-acetylalanine modification. The region spanning 6–164 is the Thioredoxin domain; it reads ARIGKPAPDF…ALRLVQAFQY (159 aa). The active-site Cysteine sulfenic acid (-SOH) intermediate is cysteine 51. Phosphoserine is present on serine 112.

The protein belongs to the peroxiredoxin family. AhpC/Prx1 subfamily. In terms of assembly, homodimer; disulfide-linked, upon oxidation. 5 homodimers assemble to form a ring-like decamer. Interacts with TIPIN. The enzyme can be inactivated by further oxidation of the cysteine sulfenic acid (C(P)-SOH) to sulphinic acid (C(P)-SO2H) instead of its condensation to a disulfide bond. It can be reactivated by forming a transient disulfide bond with sulfiredoxin SRXN1, which reduces the cysteine sulfinic acid in an ATP- and Mg-dependent manner. Post-translationally, acetylation increases resistance to transition to high molecular-mass complexes. Deacetylated by HDAC6 which decreases reducing activity.

Its subcellular location is the cytoplasm. It carries out the reaction a hydroperoxide + [thioredoxin]-dithiol = an alcohol + [thioredoxin]-disulfide + H2O. Thiol-specific peroxidase that catalyzes the reduction of hydrogen peroxide and organic hydroperoxides to water and alcohols, respectively. Plays a role in cell protection against oxidative stress by detoxifying peroxides and as sensor of hydrogen peroxide-mediated signaling events. Might participate in the signaling cascades of growth factors and tumor necrosis factor-alpha by regulating the intracellular concentrations of H(2)O(2). The sequence is that of Peroxiredoxin-2 (PRDX2) from Pongo abelii (Sumatran orangutan).